The chain runs to 325 residues: MAVENNTQRSYSIIPCFIFVELVIMAGTVLLAYYFECTDTFQVHIQGFFCQDGDLMKPYPGTEEESFISPLVLYCVLAATPTAIIFIGEISMYFIKSTRESLIAEEKMILTGDCCYLSPLLRRIIRFIGVFAFGLFATDIFVNAGQVVTGHLTPYFLTVCQPNYTSTDCRAHQQFINNGNICTGDLEVIEKARRSFPSKHAALSIYSALYATMYITSTIKTKSSRLAKPVLCLGTLCTAFLTGLNRVSEYRNHCSDVIAGFILGTAVALFLGMCVVHNFRGTQGSPSKPKPEDPRGVPLMAFPRIESPLETLSAQNHSASMTEVT.

An N-linked (GlcNAc...) asparagine glycan is attached at asparagine 5. 3 consecutive transmembrane segments (helical) span residues 13–33 (IIPC…LLAY), 67–87 (FISP…IIFI), and 127–147 (FIGV…AGQV). The N-linked (GlcNAc...) asparagine glycan is linked to asparagine 163. 3 helical membrane passes run 201 to 218 (AALS…ITST), 230 to 247 (VLCL…LNRV), and 257 to 277 (VIAG…CVVH). Serine 307 carries the phosphoserine modification. Asparagine 316 carries an N-linked (GlcNAc...) asparagine glycan.

Belongs to the PA-phosphatase related phosphoesterase family.

It localises to the cell membrane. It is found in the cell projection. Its subcellular location is the neuron projection. In terms of biological role, may play a role in neurite outgrowth and neurogenesis. The polypeptide is Phospholipid phosphatase-related protein type 1 (Mus musculus (Mouse)).